A 642-amino-acid chain; its full sequence is Threonine--tRNA ligase (642 aa).

Positions 1–61 constitute a TGS domain; sequence MIKVTFPDGN…EHDGKLQLLT (61 aa). A catalytic region spans residues 240–539; it reads DHRKIGKDLD…LIEEYKGSFP (300 aa). Zn(2+) contacts are provided by cysteine 334, histidine 385, and histidine 516.

This sequence belongs to the class-II aminoacyl-tRNA synthetase family. As to quaternary structure, homodimer. Zn(2+) serves as cofactor.

Its subcellular location is the cytoplasm. The enzyme catalyses tRNA(Thr) + L-threonine + ATP = L-threonyl-tRNA(Thr) + AMP + diphosphate + H(+). In terms of biological role, catalyzes the attachment of threonine to tRNA(Thr) in a two-step reaction: L-threonine is first activated by ATP to form Thr-AMP and then transferred to the acceptor end of tRNA(Thr). Also edits incorrectly charged L-seryl-tRNA(Thr). The polypeptide is Threonine--tRNA ligase (Acholeplasma laidlawii (strain PG-8A)).